A 30-amino-acid chain; its full sequence is Putative alpha-amylase inhibitor (30 aa).

Belongs to the leguminous lectin family.

In terms of biological role, lectin and alpha-amylase inhibitor. Acts as a defensive protein against insects. This chain is Putative alpha-amylase inhibitor, found in Phaseolus vulgaris (Kidney bean).